The sequence spans 132 residues: Small ribosomal subunit protein uS8 (132 aa).

It belongs to the universal ribosomal protein uS8 family. As to quaternary structure, part of the 30S ribosomal subunit. Contacts proteins S5 and S12.

Functionally, one of the primary rRNA binding proteins, it binds directly to 16S rRNA central domain where it helps coordinate assembly of the platform of the 30S subunit. This chain is Small ribosomal subunit protein uS8, found in Rhizobium etli (strain CIAT 652).